The following is a 758-amino-acid chain: 5-methyltetrahydropteroyltriglutamate--homocysteine methyltransferase (758 aa).

5-methyltetrahydropteroyltri-L-glutamate contacts are provided by residues arginine 17 to lysine 20 and lysine 117. Residues isoleucine 434 to serine 436 and glutamate 487 contribute to the L-homocysteine site. L-methionine is bound by residues isoleucine 434–serine 436 and glutamate 487. 5-methyltetrahydropteroyltri-L-glutamate contacts are provided by residues arginine 518 to cysteine 519 and tryptophan 564. L-homocysteine is bound at residue aspartate 602. Residue aspartate 602 participates in L-methionine binding. Glutamate 608 is a binding site for 5-methyltetrahydropteroyltri-L-glutamate. Zn(2+)-binding residues include histidine 644, cysteine 646, and glutamate 668. Catalysis depends on histidine 697, which acts as the Proton donor. Residue cysteine 729 coordinates Zn(2+).

This sequence belongs to the vitamin-B12 independent methionine synthase family. Zn(2+) is required as a cofactor.

It catalyses the reaction 5-methyltetrahydropteroyltri-L-glutamate + L-homocysteine = tetrahydropteroyltri-L-glutamate + L-methionine. The protein operates within amino-acid biosynthesis; L-methionine biosynthesis via de novo pathway; L-methionine from L-homocysteine (MetE route): step 1/1. Catalyzes the transfer of a methyl group from 5-methyltetrahydrofolate to homocysteine resulting in methionine formation. The chain is 5-methyltetrahydropteroyltriglutamate--homocysteine methyltransferase from Yersinia enterocolitica serotype O:8 / biotype 1B (strain NCTC 13174 / 8081).